The primary structure comprises 558 residues: Biotin biosynthesis bifunctional protein BioHC (558 aa).

A carboxylesterase region spans residues Met1 to Ile287. Residues Trp56, Ser115–Leu116, and Phe182–Gln186 contribute to the substrate site. Ser115 functions as the Nucleophile in the catalytic mechanism. Active-site residues include Asp246 and His274. His274 lines the substrate pocket. Residues Met288–Val558 are malonyl-ACP O-methyltransferase.

The protein in the N-terminal section; belongs to the AB hydrolase superfamily. Carboxylesterase BioH family. In the C-terminal section; belongs to the methyltransferase superfamily.

The enzyme catalyses a carboxylic ester + H2O = an alcohol + a carboxylate + H(+). It catalyses the reaction malonyl-[ACP] + S-adenosyl-L-methionine = malonyl-[ACP] methyl ester + S-adenosyl-L-homocysteine. It functions in the pathway cofactor biosynthesis; biotin biosynthesis. In terms of biological role, converts the free carboxyl group of a malonyl-thioester to its methyl ester by transfer of a methyl group from S-adenosyl-L-methionine (SAM). It allows to synthesize pimeloyl-ACP via the fatty acid synthetic pathway. The physiological role of BioH is to remove the methyl group introduced by BioC when the pimeloyl moiety is complete. It allows to synthesize pimeloyl-ACP via the fatty acid synthetic pathway through the hydrolysis of the ester bonds of pimeloyl-ACP esters. The sequence is that of Biotin biosynthesis bifunctional protein BioHC (bioC) from Saccharophagus degradans (strain 2-40 / ATCC 43961 / DSM 17024).